Reading from the N-terminus, the 116-residue chain is C-C motif chemokine 6 (116 aa).

Residues 1-21 (MRNSKTAISFFILVAVLGSQA) form the signal peptide. Intrachain disulfides connect cysteine 50/cysteine 73, cysteine 51/cysteine 89, and cysteine 60/cysteine 100.

Belongs to the intercrine beta (chemokine CC) family. The N-terminal is proteolytically cleaved by proteases associated with inflammatory responses. The processed forms CL6(22-95) and CCL6(23-95) show increase in CCR1-mediated signaling and chemotaxis assays in vitro. As to expression, expressed in myelopoietic bone marrow cultures stimulated by GM-CSF.

It localises to the secreted. In terms of biological role, chemotactic factor that attracts mostly macrophage, but it can also attract B cells, CD4(+) lymphocytes and eosinophils. This chain is C-C motif chemokine 6 (Ccl6), found in Mus musculus (Mouse).